Consider the following 160-residue polypeptide: Transcription elongation factor GreA (160 aa).

Residues 10–37 adopt a coiled-coil conformation; sequence TLEGKAKLENELQELKTVKRKEVVERIK.

This sequence belongs to the GreA/GreB family.

Its function is as follows. Necessary for efficient RNA polymerase transcription elongation past template-encoded arresting sites. The arresting sites in DNA have the property of trapping a certain fraction of elongating RNA polymerases that pass through, resulting in locked ternary complexes. Cleavage of the nascent transcript by cleavage factors such as GreA or GreB allows the resumption of elongation from the new 3'terminus. GreA releases sequences of 2 to 3 nucleotides. This chain is Transcription elongation factor GreA, found in Listeria welshimeri serovar 6b (strain ATCC 35897 / DSM 20650 / CCUG 15529 / CIP 8149 / NCTC 11857 / SLCC 5334 / V8).